The sequence spans 312 residues: uncharacterized protein (312 aa).

This is an uncharacterized protein from Escherichia coli (strain K12).